A 219-amino-acid polypeptide reads, in one-letter code: Interleukin-6 (219 aa).

A signal peptide spans M1–G20. The cysteines at positions 103 and 111 are disulfide-linked.

Belongs to the IL-6 superfamily. Component of a hexamer of two molecules each of IL6, IL6R and IL6ST; first binds to IL6R to associate with the signaling subunit IL6ST. In terms of tissue distribution, expressed in spleen, gill and gastrointestinal tract, ovary and brain. Highest expression in ovary.

It localises to the secreted. Its function is as follows. Cytokine with a wide variety of biological functions in immunity, tissue regeneration, and metabolism. Binds to IL6R, then the complex associates to the signaling subunit IL6ST/gp130 to trigger the intracellular IL6-signaling pathway. The interaction with the membrane-bound IL6R and IL6ST stimulates 'classic signaling', whereas the binding of IL6 and soluble IL6R to IL6ST stimulates 'trans-signaling'. Alternatively, 'cluster signaling' occurs when membrane-bound IL6:IL6R complexes on transmitter cells activate IL6ST receptors on neighboring receiver cells. This Oncorhynchus mykiss (Rainbow trout) protein is Interleukin-6 (il6).